Here is a 594-residue protein sequence, read N- to C-terminus: Insulin-like growth factor 2 mRNA-binding protein 3-A (594 aa).

RRM domains follow at residues 2-75 (NKLY…HSVP) and 81-156 (RKLQ…YIPD). The span at 161–177 (PQAPSQQLQQQPQQQHP) shows a compositional bias: low complexity. The segment at 161-206 (PQAPSQQLQQQPQQQHPQGRRGFGQRGPARQGSPGAAARPKPQTEV) is disordered. 2 consecutive KH domains span residues 205–270 (EVPL…CKII) and 286–353 (EIPL…EEEI). A disordered region spans residues 392–415 (GMPPPSVGVPSPTSSTSYPPFGQQ). Over residues 399 to 411 (GVPSPTSSTSYPP) the composition is skewed to low complexity. 2 KH domains span residues 418-483 (SETV…QGRI) and 500-566 (KLET…QRKI).

Belongs to the RRM IMP/VICKZ family. Homodimer and multimer. Associates with microtubules. Interaction with a translocation machinery protein TRAPA of the endoplasmic reticulum. Component of a mRNP complex, at least composed of DAZAP1, IGF2BP3, STAU and VgRBP60. The mRNP complex with DAZAP1, IGF2BP3, STAU and VgRBP60 is only found in the cytoplasm. Interacts with a hnRNP 1 related RNA transport protein VgRBP60 both in the nucleus (in a RNA-independent manner) and the cytoplasm (in a RNA-dependent manner). Found in a B3 activator complex.

Its subcellular location is the nucleus. It is found in the cytoplasm. It localises to the endoplasmic reticulum. In terms of biological role, RNA-binding protein that acts as a regulator of mRNA transport and localization. Binds to the RNA sequence motif 5'-UUCAC-3'. Preferentially binds to N6-methyladenosine (m6A)-containing mRNAs and increases their stability. Mediates the specific association of Vg1 RNA to microtubules. Binds specifically to the vegetal localization elements (VLE or VgLE) in the 3'-UTR of Vg1 and VegT mRNAs. Binds to the Vg1 and VegT mRNAs in both the nucleus and the cytoplasm. May regulate mRNA translation. Acts as a transcription regulator. Binds to the 5'-[TA]GGTTACT-3' motif within element 3 of the TFIIIA gene promoter. This Xenopus laevis (African clawed frog) protein is Insulin-like growth factor 2 mRNA-binding protein 3-A (igf2bp3-a).